We begin with the raw amino-acid sequence, 506 residues long: 2,3-bisphosphoglycerate-independent phosphoglycerate mutase (506 aa).

Residues aspartate 12 and serine 63 each contribute to the Mn(2+) site. Residue serine 63 is the Phosphoserine intermediate of the active site. Residues histidine 122, 151–152 (RD), arginine 182, arginine 188, 253–256 (RADR), and lysine 323 contribute to the substrate site. Residues aspartate 390, histidine 394, aspartate 432, histidine 433, and histidine 451 each contribute to the Mn(2+) site.

The protein belongs to the BPG-independent phosphoglycerate mutase family. Monomer. Mn(2+) serves as cofactor.

The catalysed reaction is (2R)-2-phosphoglycerate = (2R)-3-phosphoglycerate. It participates in carbohydrate degradation; glycolysis; pyruvate from D-glyceraldehyde 3-phosphate: step 3/5. Its function is as follows. Catalyzes the interconversion of 2-phosphoglycerate and 3-phosphoglycerate. This is 2,3-bisphosphoglycerate-independent phosphoglycerate mutase from Wolbachia pipientis wMel.